We begin with the raw amino-acid sequence, 404 residues long: Ubiquitin-like modifier-activating enzyme 5 (404 aa).

Ser45 carries the phosphoserine modification. ATP-binding residues include Gly83, Asp104, Lys127, Asn150, and Asn184. Cys226 and Cys229 together coordinate Zn(2+). Cys250 acts as the Glycyl thioester intermediate in catalysis. 2 residues coordinate Zn(2+): Cys303 and Cys308. Residues 334-346 (IIHEDNEWGIELV) carry the UFM1-interacting sequence (UIS) motif. The interval 347-377 (SEVSEEELKNFSGPVPDLPEGITVAYTIPKK) is linker. A phosphoserine mark is found at Ser358 and Ser393. The short motif at 389–404 (DSGESLEDLMAKMKNM) is the UFC1-binding sequence (UFC) element.

It belongs to the ubiquitin-activating E1 family. UBA5 subfamily. In terms of assembly, homodimer; homodimerization is required for UFM1 activation. Interacts (via UIS motif) with UFM1; binds UFM1 via a trans-binding mechanism in which UFM1 interacts with distinct sites in both subunits of the UBA5 homodimer. Interacts (via C-terminus) with UFC1. Interacts (via UIS motif) with GABARAPL2 and, with lower affinity, with GABARAP and GABARAPL1. In terms of tissue distribution, widely expressed.

The protein localises to the cytoplasm. Its subcellular location is the nucleus. It localises to the endoplasmic reticulum membrane. The protein resides in the golgi apparatus. Functionally, E1-like enzyme which specifically catalyzes the first step in ufmylation. Activates UFM1 by first adenylating its C-terminal glycine residue with ATP, and thereafter linking this residue to the side chain of a cysteine residue in E1, yielding a UFM1-E1 thioester and free AMP. Activates UFM1 via a trans-binding mechanism, in which UFM1 interacts with distinct sites in both subunits of the UBA5 homodimer. Trans-binding also promotes stabilization of the UBA5 homodimer, and enhances ATP-binding. Transfer of UFM1 from UBA5 to the E2-like enzyme UFC1 also takes place using a trans mechanism. Ufmylation plays a key role in various processes, such as ribosome recycling, response to DNA damage, interferon response or reticulophagy (also called ER-phagy). Ufmylation is essential for erythroid differentiation of both megakaryocytes and erythrocytes. This Homo sapiens (Human) protein is Ubiquitin-like modifier-activating enzyme 5.